Here is a 323-residue protein sequence, read N- to C-terminus: Palmitoyltransferase ZDHHC20-B (323 aa).

At 1 to 14 the chain is on the cytoplasmic side; it reads MAPTHVLRCCQRGL. A helical transmembrane segment spans residues 15 to 35; the sequence is AWIPVIFIALVVCWSYYAYVV. Residues 36–41 lie on the Lumenal side of the membrane; that stretch reads ELCLLV. The chain crosses the membrane as a helical span at residues 42 to 62; it reads YLVVFHLSFVMFVWSYWKTIF. At 63-157 the chain is on the cytoplasmic side; the sequence is TKPANPSKEF…NNCVGFSNYK (95 aa). Residues 114–164 enclose the DHHC domain; it reads RYCDRCQVIKPDRCHHCSACDMCVLKMDHHCPWVNNCVGFSNYKFFILFLT. Cys-144 functions as the S-palmitoyl cysteine intermediate in the catalytic mechanism. The helical transmembrane segment at 158 to 178 threads the bilayer; that stretch reads FFILFLTYSLVYCLFIAASVL. Topologically, residues 179-195 are lumenal; it reads QYFIKFWTSDLPESHAK. Residues 196–219 form a helical membrane-spanning segment; it reads FHVLFLFFVAAMFCISILSLFTYH. Residues 220–323 lie on the Cytoplasmic side of the membrane; it reads LWLVGKNRST…KQAKKKKTDE (104 aa).

It belongs to the DHHC palmitoyltransferase family.

Its subcellular location is the golgi apparatus membrane. It localises to the cell membrane. The protein localises to the cytoplasm. The protein resides in the perinuclear region. It is found in the endoplasmic reticulum membrane. Its subcellular location is the endoplasmic reticulum-Golgi intermediate compartment membrane. It carries out the reaction L-cysteinyl-[protein] + hexadecanoyl-CoA = S-hexadecanoyl-L-cysteinyl-[protein] + CoA. The enzyme catalyses L-cysteinyl-[protein] + tetradecanoyl-CoA = S-tetradecanoyl-L-cysteinyl-[protein] + CoA. It catalyses the reaction L-cysteinyl-[protein] + octadecanoyl-CoA = S-octadecanoyl-L-cysteinyl-[protein] + CoA. Its function is as follows. Palmitoyltransferase that could catalyze the addition of palmitate onto various protein substrates. Catalyzes palmitoylation of Cys residues on protein substrates and has a preference for acyl-CoA with C16 fatty acid chains but may also utilize acyl-CoA with C14 and C18 fatty acid chains. The chain is Palmitoyltransferase ZDHHC20-B (zdhhc20b) from Danio rerio (Zebrafish).